A 368-amino-acid chain; its full sequence is MSSPSKKLLANVRRIVPPMLERFHKGQLGRVAVIGGSAECAPHISLQWHLQGLSHVICEPSSATVIKSYSPNLMVHPILQSSNTVSSFSNSPLPHPHARALAEPVLSFLSRLHVLVIGPGLGRDPVTQEIVTEIIKEARSREIPLVLDADALLLVQEHPDLIHGYTECILTPNVVEFARLAKALRADVSSMPDSDAGKSEACKRLSNALGGVTIIQKGPHDTISNGMVNIVCDVRGGLKRSGGQGDTLTGSLGTLLAWRKAYHEGLWDTGESEASGGRELSRQDIEEDLSICGYESGDDGERDGDKPKKKLSRPATLLLVAWAGSAITRECSRRAFMAKGRSMQASDLTDEVHGSFLDLIGEPEGTKL.

The region spanning 3–359 (SPSKKLLANV…DEVHGSFLDL (357 aa)) is the YjeF C-terminal domain. (6S)-NADPHX-binding positions include Gly120 and 173–179 (NVVEFAR). Residues 217–221 (KGPHD) and 236–245 (GGLKRSGGQG) each bind ATP. (6S)-NADPHX is bound at residue Asp246.

This sequence belongs to the NnrD/CARKD family. Mg(2+) is required as a cofactor.

It is found in the cytoplasm. It catalyses the reaction (6S)-NADHX + ATP = ADP + phosphate + NADH + H(+). The enzyme catalyses (6S)-NADPHX + ATP = ADP + phosphate + NADPH + H(+). Functionally, catalyzes the dehydration of the S-form of NAD(P)HX at the expense of ATP, which is converted to ADP. Together with NAD(P)HX epimerase, which catalyzes the epimerization of the S- and R-forms, the enzyme allows the repair of both epimers of NAD(P)HX, a damaged form of NAD(P)H that is a result of enzymatic or heat-dependent hydration. This chain is ATP-dependent (S)-NAD(P)H-hydrate dehydratase, found in Ajellomyces capsulatus (strain G186AR / H82 / ATCC MYA-2454 / RMSCC 2432) (Darling's disease fungus).